Reading from the N-terminus, the 273-residue chain is MHLRLISWFFIILNFMEYIGSQNASRGRRQRRMHPNVSQGCQGGCATCSDYNGCLSCKPKLFFVLERIGMKQIGVCLSSCPSGYYGTRYPDINKCTKCKADCDTCFNKNFCTKCKSGFYLHLGKCLDNCPEGLEANNHTMECVSIVHCEASEWSPWSPCTKKGKTCGFKRGTETRVREIIQHPSAKGNLCPPTSEARKCTVQRKKCPKGERGRKGRERKRKKPNKEESKDAIPDNKGLEPSRETPEQRENKQQQKKRKVQDKQQKSVSVSTVH.

The signal sequence occupies residues 1-21 (MHLRLISWFFIILNFMEYIGS). FU repeat units lie at residues 35-86 (PNVS…GYYG) and 92-135 (INKC…GLEA). Asparagine 36 is a glycosylation site (N-linked (GlcNAc...) asparagine). 11 cysteine pairs are disulfide-bonded: cysteine 41–cysteine 48, cysteine 45–cysteine 54, cysteine 57–cysteine 76, cysteine 80–cysteine 95, cysteine 98–cysteine 105, cysteine 102–cysteine 111, cysteine 114–cysteine 125, cysteine 129–cysteine 142, cysteine 148–cysteine 190, cysteine 159–cysteine 166, and cysteine 199–cysteine 206. Residues 147-207 (HCEASEWSPW…KCTVQRKKCP (61 aa)) form the TSP type-1 domain. The interval 201 to 273 (VQRKKCPKGE…QKSVSVSTVH (73 aa)) is disordered. A compositionally biased stretch (basic residues) spans 213-223 (RKGRERKRKKP). Basic and acidic residues predominate over residues 224–252 (NKEESKDAIPDNKGLEPSRETPEQRENKQ).

The protein belongs to the R-spondin family. Interacts with the extracellular domain of FZD8 and LRP6. It however does not form a ternary complex with FZD8 and LRP6. Interacts with WNT1. Binds heparin. Interacts with LGR4, LGR5 and LGR6.

It is found in the secreted. Activator of the canonical Wnt signaling pathway by acting as a ligand for LGR4-6 receptors, which acts as a key regulator of angiogenesis. Upon binding to LGR4-6 (LGR4, LGR5 or LGR6), LGR4-6 associate with phosphorylated LRP6 and frizzled receptors that are activated by extracellular Wnt receptors, triggering the canonical Wnt signaling pathway to increase expression of target genes. Also regulates the canonical Wnt/beta-catenin-dependent pathway and non-canonical Wnt signaling by acting as an inhibitor of ZNRF3, an important regulator of the Wnt signaling pathway. Acts as a ligand for frizzled FZD8 and LRP6. May negatively regulate the TGF-beta pathway. Acts as a key regulator of angiogenesis by controlling vascular stability and pruning: acts by activating the non-canonical Wnt signaling pathway in endothelial cells. Can also amplify Wnt signaling pathway independently of LGR4-6 receptors, possibly by acting as a direct antagonistic ligand to RNF43 and ZNRF3. In Bos taurus (Bovine), this protein is R-spondin-3 (RSPO3).